We begin with the raw amino-acid sequence, 616 residues long: Dihydroxy-acid dehydratase (616 aa).

Aspartate 81 serves as a coordination point for Mg(2+). Cysteine 122 contacts [2Fe-2S] cluster. Mg(2+) is bound by residues aspartate 123 and lysine 124. At lysine 124 the chain carries N6-carboxylysine. A [2Fe-2S] cluster-binding site is contributed by cysteine 195. Glutamate 491 is a Mg(2+) binding site. The Proton acceptor role is filled by serine 517.

This sequence belongs to the IlvD/Edd family. As to quaternary structure, homodimer. [2Fe-2S] cluster is required as a cofactor. The cofactor is Mg(2+).

It catalyses the reaction (2R)-2,3-dihydroxy-3-methylbutanoate = 3-methyl-2-oxobutanoate + H2O. It carries out the reaction (2R,3R)-2,3-dihydroxy-3-methylpentanoate = (S)-3-methyl-2-oxopentanoate + H2O. Its pathway is amino-acid biosynthesis; L-isoleucine biosynthesis; L-isoleucine from 2-oxobutanoate: step 3/4. The protein operates within amino-acid biosynthesis; L-valine biosynthesis; L-valine from pyruvate: step 3/4. Functionally, functions in the biosynthesis of branched-chain amino acids. Catalyzes the dehydration of (2R,3R)-2,3-dihydroxy-3-methylpentanoate (2,3-dihydroxy-3-methylvalerate) into 2-oxo-3-methylpentanoate (2-oxo-3-methylvalerate) and of (2R)-2,3-dihydroxy-3-methylbutanoate (2,3-dihydroxyisovalerate) into 2-oxo-3-methylbutanoate (2-oxoisovalerate), the penultimate precursor to L-isoleucine and L-valine, respectively. The protein is Dihydroxy-acid dehydratase of Escherichia coli O81 (strain ED1a).